The primary structure comprises 972 residues: MVRFMYALRKRRLSLLLAMSLLVMCVASVVSPPPQALASGSGGIERVFTDKARYNPGDAVSIRVQAKNGTGSSWSGAARLEIFHLENSVYTSSQSLSLTNGQSTTLTFTWTAPSTDFRGYFVRIDAGTLGQGATAIDVSSDFTKYPRYGYISEFESGETALESKAKVDQLAQDYHINAWQFYDWMWRHDKMIKRTGGSIDSTWLDLFNREISWSTLQNQIDAVHDVNGKAMAYAMIYASRENYSPLGISPTWGIYEDSSHTNQFDVDFGDGSTYLYMSDPQNPNWQNYIHAEYIDSINTAGFDGIHVDQMGQRSNVYDYNGNSIDLSTRFSPFLDQAKSVLSANNPARDNLTYNIVDGTVNGWAVNDVSKNADLDFLYSEIWYLSDSYNQLKNYIEQLRANGGNKAVVLAAYMNYADNAGTRYEAESASMTNVSTNTNHAGYTGSGFVDQFASTGDKVSFAINAPEAGDYSLVFRYGNNTGANSTLNLYVDGNFVQKLYFFNQSSWGTWKHDAWYQVPLTQGAHTVELRYESGNVGAVNLDSLTLGTFDEHSVRLADAMMSASGATHIELGDDNQMLPHEYYPNRSKTMRSSLKNAMKDHYNFITAYENLLFDSDVVPNDTGSQFVNLTGVSASGDGSANTVWYINKRTSDYNIVHLINLLGNDNQWRNTASQPSFQTNLPAKIYIGADETISDVYLASPDLSGGETQELAFTSGTDAGGKYVSFTVPELKYWNMIYMKRTFSVPANDIYEAETAIKSNVSTNTNHAGYTGSGFVDGFSSTNDGVSFVVKSTASDDYALRFRYANGGSDATRDVYVDGKLAGTVSFKSTGSWSTWSYGEITARLEPGHHTIVLWQTSGNTGAINLDHLDLDKTYIWQFDRQIVSVPAGYRITFRTGLPGWVHWGVNGWTGVTDTPLRSNGSLDGNLDHETSIGPFATGTAVDVTFLWDDNNNGILEPSTDRWEGTDFGINVS.

The signal sequence occupies residues 1–38 (MVRFMYALRKRRLSLLLAMSLLVMCVASVVSPPPQALA). CBM6 domains lie at 421–546 (TRYE…LTLG) and 748–871 (DIYE…LDLD).

The protein belongs to the glycosyl hydrolase 66 family. As to quaternary structure, monomer.

It catalyses the reaction cyclizes part of a (1-&gt;6)-alpha-D-glucan chain by formation of a (1-&gt;6)-alpha-D-glucosidic bond.. Its function is as follows. Produces cycloisomaltooligosaccharide from dextran containing 7, 8 or 9 glucose units. The enzyme is specific for (1-&gt;6)-alpha-D-glucans (dextrans) and, without activity toward (1-&gt;4)-alpha-D-glucans, such as amylose. It also has no activity on oligosaccharides, such as amylopectin and pullulan, containing (1-&gt;6)-alpha-D-glucosidic linkages at branch points. The protein is Cycloisomaltooligosaccharide glucanotransferase of Niallia circulans (Bacillus circulans).